Consider the following 139-residue polypeptide: Prefoldin subunit alpha (139 aa).

It belongs to the prefoldin subunit alpha family. In terms of assembly, heterohexamer of two alpha and four beta subunits.

Its subcellular location is the cytoplasm. Molecular chaperone capable of stabilizing a range of proteins. Seems to fulfill an ATP-independent, HSP70-like function in archaeal de novo protein folding. The protein is Prefoldin subunit alpha of Picrophilus torridus (strain ATCC 700027 / DSM 9790 / JCM 10055 / NBRC 100828 / KAW 2/3).